A 294-amino-acid polypeptide reads, in one-letter code: Hydroxyethylthiazole kinase (294 aa).

Met57 serves as a coordination point for substrate. Residues Arg132 and Ser196 each contribute to the ATP site. Gly223 is a substrate binding site.

It belongs to the Thz kinase family. It depends on Mg(2+) as a cofactor.

It catalyses the reaction 5-(2-hydroxyethyl)-4-methylthiazole + ATP = 4-methyl-5-(2-phosphooxyethyl)-thiazole + ADP + H(+). It participates in cofactor biosynthesis; thiamine diphosphate biosynthesis; 4-methyl-5-(2-phosphoethyl)-thiazole from 5-(2-hydroxyethyl)-4-methylthiazole: step 1/1. Catalyzes the phosphorylation of the hydroxyl group of 4-methyl-5-beta-hydroxyethylthiazole (THZ). The sequence is that of Hydroxyethylthiazole kinase from Bifidobacterium adolescentis (strain ATCC 15703 / DSM 20083 / NCTC 11814 / E194a).